The sequence spans 33 residues: Dermaseptin-H9 (33 aa).

Residue L33 is modified to Leucine amide.

It belongs to the frog skin active peptide (FSAP) family. Dermaseptin subfamily. Expressed by the skin glands.

Its subcellular location is the secreted. Has antimicrobial activity. The chain is Dermaseptin-H9 from Pithecopus hypochondrialis (Orange-legged leaf frog).